Reading from the N-terminus, the 588-residue chain is Adenine deaminase (588 aa).

The protein belongs to the metallo-dependent hydrolases superfamily. Adenine deaminase family. As to quaternary structure, homodimer. Requires Mn(2+) as cofactor.

It carries out the reaction adenine + H2O + H(+) = hypoxanthine + NH4(+). This is Adenine deaminase from Escherichia coli O45:K1 (strain S88 / ExPEC).